A 338-amino-acid chain; its full sequence is RNA 3'-terminal phosphate cyclase (338 aa).

Residues glutamine 103 and 283–287 (YLADQ) contribute to the ATP site. The active-site Tele-AMP-histidine intermediate is the histidine 308.

Belongs to the RNA 3'-terminal cyclase family. Type 1 subfamily.

The protein localises to the cytoplasm. It catalyses the reaction a 3'-end 3'-phospho-ribonucleotide-RNA + ATP = a 3'-end 2',3'-cyclophospho-ribonucleotide-RNA + AMP + diphosphate. Its function is as follows. Catalyzes the conversion of 3'-phosphate to a 2',3'-cyclic phosphodiester at the end of RNA. The mechanism of action of the enzyme occurs in 3 steps: (A) adenylation of the enzyme by ATP; (B) transfer of adenylate to an RNA-N3'P to produce RNA-N3'PP5'A; (C) and attack of the adjacent 2'-hydroxyl on the 3'-phosphorus in the diester linkage to produce the cyclic end product. The biological role of this enzyme is unknown but it is likely to function in some aspects of cellular RNA processing. The polypeptide is RNA 3'-terminal phosphate cyclase (Escherichia coli O139:H28 (strain E24377A / ETEC)).